Consider the following 518-residue polypeptide: Retinal dehydrogenase 2 (518 aa).

Phosphotyrosine is present on tyrosine 168. NAD(+) is bound by residues 184–186 (IPW), 210–213 (KPAE), and 264–266 (STE). Glutamate 286 (proton acceptor) is an active-site residue. Residue cysteine 320 is the Nucleophile of the active site. Phosphoserine is present on serine 351. NAD(+) is bound by residues 366–370 (KQYNK) and glutamate 417.

Belongs to the aldehyde dehydrogenase family. In terms of assembly, homotetramer.

It localises to the cytoplasm. It carries out the reaction retinal + NAD(+) + H2O = retinoate + NADH + 2 H(+). It catalyses the reaction all-trans-retinal + NAD(+) + H2O = all-trans-retinoate + NADH + 2 H(+). The catalysed reaction is all-trans-13,14-dihydroretinal + NAD(+) + H2O = all-trans-13,14-dihydroretinoate + NADH + 2 H(+). The protein operates within cofactor metabolism; retinol metabolism. In terms of biological role, catalyzes the NAD-dependent oxidation of aldehyde substrates, such as all-trans-retinal and all-trans-13,14-dihydroretinal, to their corresponding carboxylic acids, all-trans-retinoate and all-trans-13,14-dihydroretinoate, respectively. Retinoate signaling is critical for the transcriptional control of many genes, for instance it is crucial for initiation of meiosis in both male and female. Recognizes retinal as substrate, both in its free form and when bound to cellular retinol-binding protein. Lacks activity with benzaldehyde, acetaldehyde and octanal. Displays complete lack of activity with citral. This chain is Retinal dehydrogenase 2 (Aldh1a2), found in Mus musculus (Mouse).